Consider the following 990-residue polypeptide: Presequence protease, mitochondrial (990 aa).

The transit peptide at 1–25 (MLRLKSLKKPVQAVVRRFATTSAPT) directs the protein to the mitochondrion. Histidine 89 provides a ligand contact to Zn(2+). The Proton acceptor role is filled by glutamate 92. Histidine 93 provides a ligand contact to Zn(2+). Glutamate 165 is an active-site residue. Residue glutamate 190 participates in Zn(2+) binding.

This sequence belongs to the peptidase M16 family. PreP subfamily. Monomer and homodimer; homodimerization is induced by binding of the substrate. The cofactor is Zn(2+).

The protein resides in the mitochondrion intermembrane space. It localises to the mitochondrion matrix. In terms of biological role, degrades mitochondrial transit peptides after their cleavage in the intermembrane space or in the matrix, and presequence peptides; clearance of these peptides is required to keep the presequence processing machinery running. Preferentially cleaves the N-terminal side of paired basic amino acid residues. Also degrades other unstructured peptides. May function as an ATP-dependent peptidase as opposed to a metalloendopeptidase. This Yarrowia lipolytica (strain CLIB 122 / E 150) (Yeast) protein is Presequence protease, mitochondrial (CYM1).